The sequence spans 43 residues: Metallothionein B (43 aa).

A beta region spans residues S1–C16. A divalent metal cation contacts are provided by C2, C6, C8, C11, C13, C16, C20, C21, C23, C24, C28, C31, C35, and C37. The tract at residues R17–S43 is alpha.

This sequence belongs to the metallothionein superfamily. Type 1 family.

In terms of biological role, metallothioneins have a high content of cysteine residues that bind various heavy metals. The chain is Metallothionein B from Colinus virginianus (Northern bobwhite).